Consider the following 73-residue polypeptide: Translation initiation factor IF-1 (73 aa).

Residues 1–73 (MAKKEDTIVL…TKARVVYRHR (73 aa)) enclose the S1-like domain.

This sequence belongs to the IF-1 family. Component of the 30S ribosomal translation pre-initiation complex which assembles on the 30S ribosome in the order IF-2 and IF-3, IF-1 and N-formylmethionyl-tRNA(fMet); mRNA recruitment can occur at any time during PIC assembly.

It is found in the cytoplasm. Its function is as follows. One of the essential components for the initiation of protein synthesis. Stabilizes the binding of IF-2 and IF-3 on the 30S subunit to which N-formylmethionyl-tRNA(fMet) subsequently binds. Helps modulate mRNA selection, yielding the 30S pre-initiation complex (PIC). Upon addition of the 50S ribosomal subunit IF-1, IF-2 and IF-3 are released leaving the mature 70S translation initiation complex. The chain is Translation initiation factor IF-1 from Chlamydia caviae (strain ATCC VR-813 / DSM 19441 / 03DC25 / GPIC) (Chlamydophila caviae).